The following is a 497-amino-acid chain: PHD finger protein 10 (497 aa).

Residues 1–61 form a disordered region; sequence MAAAGPGAAL…SSRSCETSSQ (61 aa). S11, S35, and S49 each carry phosphoserine. The tract at residues 88–184 is essential to induce neural progenitor proliferation; sequence MLQEQVSEYL…HYKEYSQMQQ (97 aa). The SAY stretch occupies residues 88-294; that stretch reads MLQEQVSEYL…PPLDPELPAL (207 aa). K240 participates in a covalent cross-link: Glycyl lysine isopeptide (Lys-Gly) (interchain with G-Cter in SUMO2). Phosphoserine is present on S269. Over residues 284–295 the composition is skewed to low complexity; that stretch reads EPPLDPELPALD. Residues 284-367 form a disordered region; it reads EPPLDPELPA…KRSVLSKSVP (84 aa). Residues 291–333 form an essential to induce neural progenitor proliferation region; the sequence is LPALDSDGDSDDGEDGGGDEKRKNKGTSDSSSGNVSEGDSPPD. S296, S300, S326, and S330 each carry phosphoserine. The span at 296–307 shows a compositional bias: acidic residues; that stretch reads SDGDSDDGEDGG. Positions 317–327 are enriched in polar residues; the sequence is TSDSSSGNVSE. Residues 344 to 358 are compositionally biased toward basic and acidic residues; sequence KSKDKMATPRKDGSK. Residues 378-435 form a PHD-type 1; degenerate zinc finger; that stretch reads LCGICLKGKESNKKGKAESLIHCSQCDNSGHPSCLDMTMELVSMIKTYPWQCMECKTC. K384 participates in a covalent cross-link: Glycyl lysine isopeptide (Lys-Gly) (interchain with G-Cter in SUMO2). The PHD-type 2; degenerate zinc finger occupies 437-480; sequence ICGQPHHEEEMMFCDVCDRGYHTFCVGLGAIPSGRWICDCCQRA.

The protein belongs to the SAYP family. As to quaternary structure, component of neural progenitors-specific chromatin remodeling complex (npBAF complex) composed of at least, ARID1A/BAF250A or ARID1B/BAF250B, SMARCD1/BAF60A, SMARCD3/BAF60C, SMARCA2/BRM/BAF190B, SMARCA4/BRG1/BAF190A, SMARCB1/BAF47, SMARCC1/BAF155, SMARCE1/BAF57, SMARCC2/BAF170, PHF10/BAF45A, ACTL6A/BAF53A and actin. Interacts with ACTL6A/BAF53A, SMARCA2/BRM/BAF190B, SMARCA4/BRG1/BAF190A and PBRM1/BAF180.

The protein resides in the nucleus. In terms of biological role, involved in transcription activity regulation by chromatin remodeling. Belongs to the neural progenitors-specific chromatin remodeling complex (npBAF complex) and is required for the proliferation of neural progenitors. During neural development a switch from a stem/progenitor to a post-mitotic chromatin remodeling mechanism occurs as neurons exit the cell cycle and become committed to their adult state. The transition from proliferating neural stem/progenitor cells to post-mitotic neurons requires a switch in subunit composition of the npBAF and nBAF complexes. As neural progenitors exit mitosis and differentiate into neurons, npBAF complexes which contain ACTL6A/BAF53A and PHF10/BAF45A, are exchanged for homologous alternative ACTL6B/BAF53B and DPF1/BAF45B or DPF3/BAF45C subunits in neuron-specific complexes (nBAF). The npBAF complex is essential for the self-renewal/proliferative capacity of the multipotent neural stem cells. The nBAF complex along with CREST plays a role regulating the activity of genes essential for dendrite growth. This chain is PHD finger protein 10 (Phf10), found in Rattus norvegicus (Rat).